The sequence spans 116 residues: Methionine-R-sulfoxide reductase B1 (116 aa).

One can recognise a MsrB domain in the interval 1 to 106 (MSFCSFFGGE…FSSSLKFIPK (106 aa)). Positions 23, 26, 71, and 74 each coordinate Zn(2+). Sec-95 acts as the Nucleophile in catalysis. A non-standard amino acid (selenocysteine) is located at residue Sec-95.

Belongs to the MsrB Met sulfoxide reductase family. It depends on Zn(2+) as a cofactor. Post-translationally, truncated MSRB1/SEPX1 proteins produced by failed UGA/Sec decoding are ubiquitinated by the CRL2(FEM1C) E3 ubiquitin-protein ligase complex.

The protein localises to the cytoplasm. The protein resides in the nucleus. It localises to the cytoskeleton. It carries out the reaction L-methionyl-[protein] + [thioredoxin]-disulfide + H2O = L-methionyl-(R)-S-oxide-[protein] + [thioredoxin]-dithiol. The enzyme catalyses [thioredoxin]-disulfide + L-methionine + H2O = L-methionine (R)-S-oxide + [thioredoxin]-dithiol. Its function is as follows. Methionine-sulfoxide reductase that specifically reduces methionine (R)-sulfoxide back to methionine. While in many cases, methionine oxidation is the result of random oxidation following oxidative stress, methionine oxidation is also a post-translational modification that takes place on specific residue. Acts as a regulator of actin assembly by reducing methionine (R)-sulfoxide mediated by MICALs (MICAL1, MICAL2 or MICAL3) on actin, thereby promoting filament repolymerization. Plays a role in innate immunity by reducing oxidized actin, leading to actin repolymerization in macrophages. This Rattus norvegicus (Rat) protein is Methionine-R-sulfoxide reductase B1 (Msrb1).